The following is a 210-amino-acid chain: 3-hexulose-6-phosphate synthase 3 (210 aa).

The protein belongs to the HPS/KGPDC family. HPS subfamily.

It carries out the reaction D-ribulose 5-phosphate + formaldehyde = D-arabino-hex-3-ulose 6-phosphate. It functions in the pathway one-carbon metabolism; formaldehyde assimilation via RuMP pathway; D-fructose 6-phosphate from D-ribulose 5-phosphate and formaldehyde: step 1/2. Its function is as follows. Catalyzes the condensation of ribulose 5-phosphate with formaldehyde to form 3-hexulose 6-phosphate. The protein is 3-hexulose-6-phosphate synthase 3 of Staphylococcus saprophyticus subsp. saprophyticus (strain ATCC 15305 / DSM 20229 / NCIMB 8711 / NCTC 7292 / S-41).